A 116-amino-acid polypeptide reads, in one-letter code: Putative antiporter subunit mnhC2 (116 aa).

The next 3 membrane-spanning stretches (helical) occupy residues leucine 3 to leucine 23, isoleucine 28 to histidine 48, and alanine 72 to valine 92.

Belongs to the CPA3 antiporters (TC 2.A.63) subunit C family. May form a heterooligomeric complex that consists of seven subunits: mnhA2, mnhB2, mnhC2, mnhD2, mnhE2, mnhF2 and mnhG2.

It is found in the cell membrane. In Staphylococcus haemolyticus (strain JCSC1435), this protein is Putative antiporter subunit mnhC2 (mnhC2).